A 204-amino-acid chain; its full sequence is Recombination protein RecR (204 aa).

The C4-type zinc finger occupies 58-75; the sequence is CSVCQNVTDREEDPCSIC. The Toprim domain occupies 83 to 181; it reads TVICVVESPV…EVTKIARGIP (99 aa).

The protein belongs to the RecR family.

Its function is as follows. May play a role in DNA repair. It seems to be involved in an RecBC-independent recombinational process of DNA repair. It may act with RecF and RecO. This Chlorobium luteolum (strain DSM 273 / BCRC 81028 / 2530) (Pelodictyon luteolum) protein is Recombination protein RecR.